The primary structure comprises 340 residues: Arginase 1, mitochondrial (340 aa).

Residues Met-1–Ala-24 constitute a mitochondrion transit peptide. 4 residues coordinate Mn(2+): His-159, Asp-183, His-185, and Asp-187. Residues His-185–Tyr-189 and Glu-193–Asn-195 each bind substrate. Residues Asp-268 and Asp-270 each coordinate Mn(2+). Glu-311 is a substrate binding site.

The protein belongs to the arginase family. It depends on Mn(2+) as a cofactor.

It is found in the mitochondrion. It carries out the reaction L-arginine + H2O = urea + L-ornithine. Its pathway is nitrogen metabolism; urea cycle; L-ornithine and urea from L-arginine: step 1/1. Catalyzes the hydrolysis of L-arginine to urea and L-ornithine. The latter can be utilized in the urea cycle or as a precursor for the synthesis of both polyamines and proline. In Oryza sativa subsp. japonica (Rice), this protein is Arginase 1, mitochondrial (ARG1).